A 187-amino-acid chain; its full sequence is UPF0301 protein YqgE (187 aa).

The protein belongs to the UPF0301 (AlgH) family.

This is UPF0301 protein YqgE from Salmonella paratyphi A (strain ATCC 9150 / SARB42).